A 629-amino-acid polypeptide reads, in one-letter code: Rho GTPase-activating protein conundrum (629 aa).

Residues 185 to 294 (PPKSGTYADI…CRDSSSLDSC (110 aa)) are required for interaction with Moe. A disordered region spans residues 237 to 261 (SIGRSKESRSENDARSQKKKSSEVL). The segment covering 240–258 (RSKESRSENDARSQKKKSS) has biased composition (basic and acidic residues). Residues 359–565 (VSINALIRRD…ILILRGEKLF (207 aa)) form the Rho-GAP domain.

In terms of assembly, interacts with Moe (via FERM domain).

The protein localises to the cytoplasm. Its subcellular location is the cell membrane. It is found in the cell cortex. The protein resides in the cell junction. GTPase-activating protein (GAP) for Rho1; functions with the ERM protein Moe to regulate Rho1 and control proliferation in the developing epithelium. Recruited by Moe to the cell cortex where it negatively regulates Rho1 activity. Can also promote cell proliferation independently of its GAP activity, perhaps by acting with Arf6 to positively regulate Rac1. This chain is Rho GTPase-activating protein conundrum, found in Drosophila melanogaster (Fruit fly).